Consider the following 596-residue polypeptide: NADH-quinone oxidoreductase subunit C/D (596 aa).

An NADH dehydrogenase I subunit C region spans residues 1 to 186 (MTDLTAQEPA…SPFELTKAKQ (186 aa)). Residues 210–596 (DFMFLNLGPN…IDFVMSDVDR (387 aa)) form an NADH dehydrogenase I subunit D region.

This sequence in the N-terminal section; belongs to the complex I 30 kDa subunit family. In the C-terminal section; belongs to the complex I 49 kDa subunit family. NDH-1 is composed of 13 different subunits. Subunits NuoB, CD, E, F, and G constitute the peripheral sector of the complex.

It localises to the cell inner membrane. It catalyses the reaction a quinone + NADH + 5 H(+)(in) = a quinol + NAD(+) + 4 H(+)(out). NDH-1 shuttles electrons from NADH, via FMN and iron-sulfur (Fe-S) centers, to quinones in the respiratory chain. The immediate electron acceptor for the enzyme in this species is believed to be ubiquinone. Couples the redox reaction to proton translocation (for every two electrons transferred, four hydrogen ions are translocated across the cytoplasmic membrane), and thus conserves the redox energy in a proton gradient. The chain is NADH-quinone oxidoreductase subunit C/D from Shigella flexneri serotype 5b (strain 8401).